A 383-amino-acid chain; its full sequence is 8-amino-7-oxononanoate synthase (383 aa).

Residue Arg22 coordinates substrate. 109–110 (GF) provides a ligand contact to pyridoxal 5'-phosphate. His134 is a substrate binding site. Pyridoxal 5'-phosphate-binding residues include Ser178, His206, and Thr232. Lys235 carries the post-translational modification N6-(pyridoxal phosphate)lysine. Residue Thr348 coordinates substrate.

This sequence belongs to the class-II pyridoxal-phosphate-dependent aminotransferase family. BioF subfamily. As to quaternary structure, homodimer. Requires pyridoxal 5'-phosphate as cofactor.

It carries out the reaction 6-carboxyhexanoyl-[ACP] + L-alanine + H(+) = (8S)-8-amino-7-oxononanoate + holo-[ACP] + CO2. Its pathway is cofactor biosynthesis; biotin biosynthesis. Its function is as follows. Catalyzes the decarboxylative condensation of pimeloyl-[acyl-carrier protein] and L-alanine to produce 8-amino-7-oxononanoate (AON), [acyl-carrier protein], and carbon dioxide. The protein is 8-amino-7-oxononanoate synthase of Vibrio parahaemolyticus serotype O3:K6 (strain RIMD 2210633).